Consider the following 262-residue polypeptide: Ribose-5-phosphate isomerase A (262 aa).

Substrate contacts are provided by residues 33 to 36 (TGST), 89 to 92 (DGAD), and 102 to 105 (KGGG). The active-site Proton acceptor is the Glu111. Lys129 contacts substrate.

This sequence belongs to the ribose 5-phosphate isomerase family. In terms of assembly, homodimer.

It catalyses the reaction aldehydo-D-ribose 5-phosphate = D-ribulose 5-phosphate. It participates in carbohydrate degradation; pentose phosphate pathway; D-ribose 5-phosphate from D-ribulose 5-phosphate (non-oxidative stage): step 1/1. Catalyzes the reversible conversion of ribose-5-phosphate to ribulose 5-phosphate. The sequence is that of Ribose-5-phosphate isomerase A from Ruegeria sp. (strain TM1040) (Silicibacter sp.).